The sequence spans 417 residues: Serine hydroxymethyltransferase (417 aa).

(6S)-5,6,7,8-tetrahydrofolate-binding positions include leucine 121 and 125-127 (GHL). Lysine 229 carries the N6-(pyridoxal phosphate)lysine modification. 355–357 (SPF) serves as a coordination point for (6S)-5,6,7,8-tetrahydrofolate.

The protein belongs to the SHMT family. As to quaternary structure, homodimer. Pyridoxal 5'-phosphate is required as a cofactor.

The protein resides in the cytoplasm. The catalysed reaction is (6R)-5,10-methylene-5,6,7,8-tetrahydrofolate + glycine + H2O = (6S)-5,6,7,8-tetrahydrofolate + L-serine. The protein operates within one-carbon metabolism; tetrahydrofolate interconversion. It functions in the pathway amino-acid biosynthesis; glycine biosynthesis; glycine from L-serine: step 1/1. Its function is as follows. Catalyzes the reversible interconversion of serine and glycine with tetrahydrofolate (THF) serving as the one-carbon carrier. This reaction serves as the major source of one-carbon groups required for the biosynthesis of purines, thymidylate, methionine, and other important biomolecules. Also exhibits THF-independent aldolase activity toward beta-hydroxyamino acids, producing glycine and aldehydes, via a retro-aldol mechanism. This chain is Serine hydroxymethyltransferase, found in Buchnera aphidicola subsp. Baizongia pistaciae (strain Bp).